The following is a 133-amino-acid chain: Large ribosomal subunit protein bL17 (133 aa).

Belongs to the bacterial ribosomal protein bL17 family. Part of the 50S ribosomal subunit. Contacts protein L32.

The protein is Large ribosomal subunit protein bL17 of Nitratidesulfovibrio vulgaris (strain ATCC 29579 / DSM 644 / CCUG 34227 / NCIMB 8303 / VKM B-1760 / Hildenborough) (Desulfovibrio vulgaris).